A 362-amino-acid chain; its full sequence is Aminomethyltransferase (362 aa).

The protein belongs to the GcvT family. As to quaternary structure, the glycine cleavage system is composed of four proteins: P, T, L and H.

The catalysed reaction is N(6)-[(R)-S(8)-aminomethyldihydrolipoyl]-L-lysyl-[protein] + (6S)-5,6,7,8-tetrahydrofolate = N(6)-[(R)-dihydrolipoyl]-L-lysyl-[protein] + (6R)-5,10-methylene-5,6,7,8-tetrahydrofolate + NH4(+). The glycine cleavage system catalyzes the degradation of glycine. This chain is Aminomethyltransferase, found in Listeria monocytogenes serotype 4a (strain HCC23).